We begin with the raw amino-acid sequence, 142 residues long: MAKKITGYIKLQVKAAQANPSPPIGPALGQRGLNIMEFCKAFNAQTQGVEPGLPLPVVITVFADKSFTFEVKTPPAAVLLMKAAGLPKGSGRPNTVKVGKVSEAQIEDIAKTKMPDLNTQDIESAKRSVRGTARSMGLTVEG.

Belongs to the universal ribosomal protein uL11 family. As to quaternary structure, part of the ribosomal stalk of the 50S ribosomal subunit. Interacts with L10 and the large rRNA to form the base of the stalk. L10 forms an elongated spine to which L12 dimers bind in a sequential fashion forming a multimeric L10(L12)X complex. One or more lysine residues are methylated.

In terms of biological role, forms part of the ribosomal stalk which helps the ribosome interact with GTP-bound translation factors. This Acidithiobacillus ferrooxidans (strain ATCC 23270 / DSM 14882 / CIP 104768 / NCIMB 8455) (Ferrobacillus ferrooxidans (strain ATCC 23270)) protein is Large ribosomal subunit protein uL11.